Reading from the N-terminus, the 623-residue chain is MPHSDELDAGNVLAVENLNIAFMQDQQKIAAVRNLSFSLQRGETLAIVGESGSGKSVTALALMRLLEQAGGLVQCDKMLLQRRSREVIELSEQNAAQMRHVRGADMAMIFQEPMTSLNPVFTVGEQIAESIRLHQNASREEAMVEAKRMLDQVRIPEAQTILSRYPHQLSGGMRQRVMIAMALSCRPAVLIADEPTTALDVTIQAQILQLIKVLQKEMSMGVIFITHDMGVVAEIADRVLVMYQGEAVETGTVEQIFHAPQHPYTRALLAAVPQLGAMKGLDYPRRFPLISLEHPAKQAPPIEQKTVVDGEPVLRVRNLVTRFPLRSGLLNRVTREVHAVEKVSFDLWPGETLSLVGESGSGKSTTGRALLRLVESQGGEIIFNGQRIDTLSPGKLQALRRDIQFIFQDPYASLDPRQTIGDSIIEPLRVHGLLPGKDAAARVAWLLERVGLLPEHAWRYPHEFSGGQRQRICIARALALNPKVIIADEAVSALDVSIRGQIINLLLDLQRDFGIAYLFISHDMAVVERISHRVAVMYLGQIVEIGPRRAVFENPQHPYTRKLLAAVPVAEPSRQRPQRVLLSDDLPSNIHLRGEEVAAVSLQCVGPGHYVAQPQSEYAFMRR.

2 ABC transporter domains span residues 15–269 and 314–564; these read VENL…RALL and LRVR…RKLL. Residues 49–56 and 357–364 each bind ATP; these read GESGSGKS.

The protein belongs to the ABC transporter superfamily. Glutathione importer (TC 3.A.1.5.11) family. In terms of assembly, the complex is composed of two ATP-binding proteins (GsiA), two transmembrane proteins (GsiC and GsiD) and a solute-binding protein (GsiB).

The protein resides in the cell inner membrane. The catalysed reaction is glutathione(out) + ATP + H2O = glutathione(in) + ADP + phosphate + H(+). Its activity is regulated as follows. Inhibited by verapamil but not by carbonyl cyanide m-chlorophenylhydrazone (CCCP). In terms of biological role, part of the ABC transporter complex GsiABCD involved in glutathione import. Responsible for energy coupling to the transport system. This chain is Glutathione import ATP-binding protein GsiA, found in Escherichia coli (strain K12).